The primary structure comprises 383 residues: Serpin B5 (383 aa).

N-linked (GlcNAc...) asparagine glycans are attached at residues Asn-106, Asn-133, Asn-176, and Asn-361.

Belongs to the serpin family. Ov-serpin subfamily.

It localises to the secreted. The protein localises to the extracellular space. In terms of biological role, may not exhibit serine protease inhibitory activity. In Xenopus laevis (African clawed frog), this protein is Serpin B5 (serpinb5).